The sequence spans 488 residues: Glutamyl-tRNA(Gln) amidotransferase subunit A (488 aa).

Active-site charge relay system residues include Lys-77 and Ser-152. Ser-176 functions as the Acyl-ester intermediate in the catalytic mechanism.

The protein belongs to the amidase family. GatA subfamily. As to quaternary structure, heterotrimer of A, B and C subunits.

It carries out the reaction L-glutamyl-tRNA(Gln) + L-glutamine + ATP + H2O = L-glutaminyl-tRNA(Gln) + L-glutamate + ADP + phosphate + H(+). In terms of biological role, allows the formation of correctly charged Gln-tRNA(Gln) through the transamidation of misacylated Glu-tRNA(Gln) in organisms which lack glutaminyl-tRNA synthetase. The reaction takes place in the presence of glutamine and ATP through an activated gamma-phospho-Glu-tRNA(Gln). The protein is Glutamyl-tRNA(Gln) amidotransferase subunit A of Streptococcus agalactiae serotype Ia (strain ATCC 27591 / A909 / CDC SS700).